The chain runs to 583 residues: Arginine--tRNA ligase (583 aa).

The short motif at 121-131 is the 'HIGH' region element; sequence ANPTGPLHLGH.

It belongs to the class-I aminoacyl-tRNA synthetase family. Monomer.

Its subcellular location is the cytoplasm. The catalysed reaction is tRNA(Arg) + L-arginine + ATP = L-arginyl-tRNA(Arg) + AMP + diphosphate. This is Arginine--tRNA ligase (argS) from Aquifex aeolicus (strain VF5).